Reading from the N-terminus, the 411-residue chain is MPSVLWILFDGGGDRPTGGKTPFYVAFKPVIDYFTSLGSCGILDPISPGVRPGSDTAHLALFGYDPYRYYTGRGAFEALGAGVDLRPGDVAFRTNLATVDESGVVVDRRAGRYIAPEEARAVERLMASIGEEVGKAYGVEVLYRSTVEHRGVLVLRGPVSHKVSDTDPHKVGERIHMSEPLDGSKEAALTAQVVNEITRRFSAAAEGLEVNKARKASGRPPINAILLRGGGYMPQIEPVKERYKVRAAAIAGVALIRGVARAVGMDVYTAPGLGGTKDDVFDEAVKLAVELMSRYDVVFLHVKGTDSTAHDGDFRGKVSVIERLDKALSPYVDKIAGNYLVVTSDHATPVSIREHTGEPVPFLLYGPDVVTDDVGKFSELTCWRGALGRLRGIDVMPTLSSYLGLAEKFGE.

It belongs to the BPG-independent phosphoglycerate mutase family. A-PGAM subfamily.

It carries out the reaction (2R)-2-phosphoglycerate = (2R)-3-phosphoglycerate. It functions in the pathway carbohydrate degradation; glycolysis; pyruvate from D-glyceraldehyde 3-phosphate: step 3/5. Functionally, catalyzes the interconversion of 2-phosphoglycerate and 3-phosphoglycerate. This is 2,3-bisphosphoglycerate-independent phosphoglycerate mutase from Pyrobaculum neutrophilum (strain DSM 2338 / JCM 9278 / NBRC 100436 / V24Sta) (Thermoproteus neutrophilus).